A 194-amino-acid chain; its full sequence is Peptidyl-tRNA hydrolase (194 aa).

Y17 contributes to the tRNA binding site. H22 serves as the catalytic Proton acceptor. TRNA-binding residues include F68, N70, and N116.

This sequence belongs to the PTH family. In terms of assembly, monomer.

It localises to the cytoplasm. The catalysed reaction is an N-acyl-L-alpha-aminoacyl-tRNA + H2O = an N-acyl-L-amino acid + a tRNA + H(+). In terms of biological role, hydrolyzes ribosome-free peptidyl-tRNAs (with 1 or more amino acids incorporated), which drop off the ribosome during protein synthesis, or as a result of ribosome stalling. Catalyzes the release of premature peptidyl moieties from peptidyl-tRNA molecules trapped in stalled 50S ribosomal subunits, and thus maintains levels of free tRNAs and 50S ribosomes. This is Peptidyl-tRNA hydrolase from Haemophilus ducreyi (strain 35000HP / ATCC 700724).